Consider the following 391-residue polypeptide: Heme A synthase (391 aa).

The next 8 helical transmembrane spans lie at 37-57 (IRLW…VGGL), 121-141 (RQLG…FLAA), 152-172 (LLAL…MVAS), 186-206 (LATH…QALL), 229-249 (TTVL…VAGI), 298-318 (FLHR…WIFG), 332-352 (LLAM…LSAA), and 354-374 (WQVA…ILHA). Heme is bound at residue H300. H360 is a binding site for heme.

Belongs to the COX15/CtaA family. Type 2 subfamily. In terms of assembly, interacts with CtaB. Heme b is required as a cofactor.

It localises to the cell membrane. It carries out the reaction Fe(II)-heme o + 2 A + H2O = Fe(II)-heme a + 2 AH2. It functions in the pathway porphyrin-containing compound metabolism; heme A biosynthesis; heme A from heme O: step 1/1. Functionally, catalyzes the conversion of heme O to heme A by two successive hydroxylations of the methyl group at C8. The first hydroxylation forms heme I, the second hydroxylation results in an unstable dihydroxymethyl group, which spontaneously dehydrates, resulting in the formyl group of heme A. The protein is Heme A synthase of Cereibacter sphaeroides (strain ATCC 17023 / DSM 158 / JCM 6121 / CCUG 31486 / LMG 2827 / NBRC 12203 / NCIMB 8253 / ATH 2.4.1.) (Rhodobacter sphaeroides).